Here is a 332-residue protein sequence, read N- to C-terminus: MKGYLKDFLKPRSVEIEPLSDNRAKVVLEPLERGFGHTLGNALRRLLLSSMPGTAVTEVEIEGVQHEYTAVEGIHEDTVDILLNLKDLAVRLNERDSVTLSVEKQGPGSVTAADIATDHDVEIQNPDLHIATITHEQPFKASLKIERGRGYLPVTAREEEDTRTIGHLALDASFSPVRRVSYAVESARVEQRTDLDKLVLDVETNGVVTPEEAVKFAASLLRDQLSVFVDLEGGLLEGGDEQEEPEIDPVLLRPIDDLELTVRSANCLKAESIHFVGDLVQRTEVELLKTPNLGKKSLNEIKDTLAEHGLSLGMQLDNWPPPSLGDRARIAG.

The alpha N-terminal domain (alpha-NTD) stretch occupies residues 1–232; the sequence is MKGYLKDFLK…DQLSVFVDLE (232 aa). The alpha C-terminal domain (alpha-CTD) stretch occupies residues 247 to 332; the sequence is IDPVLLRPID…SLGDRARIAG (86 aa).

It belongs to the RNA polymerase alpha chain family. As to quaternary structure, homodimer. The RNAP catalytic core consists of 2 alpha, 1 beta, 1 beta' and 1 omega subunit. When a sigma factor is associated with the core the holoenzyme is formed, which can initiate transcription.

It catalyses the reaction RNA(n) + a ribonucleoside 5'-triphosphate = RNA(n+1) + diphosphate. DNA-dependent RNA polymerase catalyzes the transcription of DNA into RNA using the four ribonucleoside triphosphates as substrates. The chain is DNA-directed RNA polymerase subunit alpha from Halorhodospira halophila (strain DSM 244 / SL1) (Ectothiorhodospira halophila (strain DSM 244 / SL1)).